Reading from the N-terminus, the 166-residue chain is Urease accessory protein UreE (166 aa).

It belongs to the UreE family.

It localises to the cytoplasm. Involved in urease metallocenter assembly. Binds nickel. Probably functions as a nickel donor during metallocenter assembly. The chain is Urease accessory protein UreE from Azotobacter vinelandii (strain DJ / ATCC BAA-1303).